The following is a 120-amino-acid chain: Inner membrane protein YidG (120 aa).

The Cytoplasmic segment spans residues 1 to 21 (MPDSRKARRIADPGLQPERTS). Residues 22–39 (LAWFRTMLGYGALMALAI) traverse the membrane as a helical segment. Residues 40–48 (KHNWHQAGM) lie on the Periplasmic side of the membrane. The helical transmembrane segment at 49–68 (LFWISIGILAIVALILWHYT) threads the bilayer. Topologically, residues 69–90 (RNRNLMDVTNSDFSQFHVVRDK) are cytoplasmic. A helical transmembrane segment spans residues 91 to 113 (FLISLAVLSLAILFAVTHIHQLI). Over 114-120 (VFIERVA) the chain is Periplasmic.

It localises to the cell inner membrane. In Escherichia coli O157:H7, this protein is Inner membrane protein YidG (yidG).